A 156-amino-acid chain; its full sequence is uncharacterized protein (156 aa).

This is an uncharacterized protein from Staphylococcus aureus (strain MW2).